A 126-amino-acid polypeptide reads, in one-letter code: Protein mmf2, mitochondrial (126 aa).

It belongs to the RutC family.

The protein localises to the mitochondrion. The protein resides in the cytoplasm. In terms of biological role, plays a role in the maintenance of mitochondrial DNA. The chain is Protein mmf2, mitochondrial (mmf2) from Schizosaccharomyces pombe (strain 972 / ATCC 24843) (Fission yeast).